We begin with the raw amino-acid sequence, 85 residues long: Elongation factor 1-beta (85 aa).

This sequence belongs to the EF-1-beta/EF-1-delta family.

In terms of biological role, promotes the exchange of GDP for GTP in EF-1-alpha/GDP, thus allowing the regeneration of EF-1-alpha/GTP that could then be used to form the ternary complex EF-1-alpha/GTP/AAtRNA. This is Elongation factor 1-beta from Methanoregula boonei (strain DSM 21154 / JCM 14090 / 6A8).